Reading from the N-terminus, the 423-residue chain is MAFRKSNVYLSLVNSYIIDSPQPSSINYWWNMGSLLGLCLVIQIVTGIFMAMHYSSNIELAFSSVEHIMRDVHNGYILRYLHANGASFFFMVMFMHMAKGLYYGSYRSPRVTLWNVGVIIFILTIATAFLGYCCVYGQMSHWGNMNIASNMFNMMKTIYMMMLMLLIYIFYTIMMRQMMKTKEYTMLIKSMDYINKNKYMINLNMTNKKDMNNNIGPLNMNILSIIYGSMLGDGHAEKRKGGKGTRIVFQQEYCNINYLYYLHSLLANLGYCNTNLPLIKTRLGKKGKIRQYLKFNTWTYDSFNMIYSEWYIKNMSGKGNIKVIPKSLDNYLTPLALAIWIMDDGCKLGKGLKFTTNCFSYKDVQYLTYLLHNKYNIKSTITKGNKENTQFVIYVWKESMPILTKIVSPYIIPSMKYKLGNYL.

The Mitochondrial matrix segment spans residues 1-31 (MAFRKSNVYLSLVNSYIIDSPQPSSINYWWN). Positions 1 to 143 (MAFRKSNVYL…CVYGQMSHWG (143 aa)) are cytochrome b. Residues 32-52 (MGSLLGLCLVIQIVTGIFMAM) traverse the membrane as a helical segment. Topologically, residues 53–84 (HYSSNIELAFSSVEHIMRDVHNGYILRYLHAN) are mitochondrial intermembrane. The helical transmembrane segment at 85–105 (GASFFFMVMFMHMAKGLYYGS) threads the bilayer. Residues 106–115 (YRSPRVTLWN) lie on the Mitochondrial matrix side of the membrane. Residues 116-136 (VGVIIFILTIATAFLGYCCVY) traverse the membrane as a helical segment. At 137–153 (GQMSHWGNMNIASNMFN) the chain is on the mitochondrial intermembrane side. Positions 144-423 (NMNIASNMFN…SMKYKLGNYL (280 aa)) are maturase. A helical transmembrane segment spans residues 154–174 (MMKTIYMMMLMLLIYIFYTIM). Residues 175–423 (MRQMMKTKEY…SMKYKLGNYL (249 aa)) lie on the Mitochondrial matrix side of the membrane.

This sequence in the N-terminal section; belongs to the cytochrome b family. It in the C-terminal section; belongs to the LAGLIDADG endonuclease family.

Its subcellular location is the mitochondrion inner membrane. Its function is as follows. This protein is responsible for splicing and maturation of cytochrome b mRNA. Specifically, it may be responsible for the splicing specificity of the second intron. The protein is Cytochrome b mRNA maturase bI2 (BI2) of Saccharomyces cerevisiae (strain ATCC 204508 / S288c) (Baker's yeast).